Consider the following 118-residue polypeptide: MRWALLVLLAFLSPASQKSSNLEGGTKSVTRPTRSSAEITCDLTVINAFYIHWYLHQEGKAPQRLLYYDVSNSKDVLESGLSPGKYYTHTPRRWSWILILRNLIENDSGVYYCATWDR.

Positions 1–17 (MRWALLVLLAFLSPASQ) are cleaved as a signal peptide. An Ig-like domain is found at 18–118 (KSSNLEGGTK…GVYYCATWDR (101 aa)). Cys-41 and Cys-113 are disulfide-bonded. N-linked (GlcNAc...) asparagine glycosylation is present at Asn-106.

In terms of assembly, gamma-delta TR is a heterodimer composed of a gamma and delta chain; disulfide-linked. The gamma-delta TR is associated with the transmembrane signaling CD3 coreceptor proteins following the stoichiometry: a single gamma-delta TR heterodimer associates with one CD3D-CD3E heterodimer, one CD3G-CD3E heterodimer and one CD247 homodimer forming a stable octameric structure. Upon activation, gamma-delta TR complex associates with FCER1G to initiate intracellular signaling.

The protein resides in the cell membrane. V region of the variable domain of T cell receptor (TR) gamma chain that participates in the antigen recognition. Gamma-delta TRs recognize a variety of self and foreign non-peptide antigens frequently expressed at the epithelial boundaries between the host and external environment, including endogenous lipids presented by MH-like protein CD1D and phosphoantigens presented by butyrophilin-like molecule BTN3A1. Upon antigen recognition induces rapid, innate-like immune responses involved in pathogen clearance and tissue repair. Binding of gamma-delta TR complex to antigen triggers phosphorylation of immunoreceptor tyrosine-based activation motifs (ITAMs) in the CD3 chains by the LCK and FYN kinases, allowing the recruitment, phosphorylation, and activation of ZAP70 that facilitates phosphorylation of the scaffolding proteins LCP2 and LAT. This lead to the formation of a supramolecular signalosome that recruits the phospholipase PLCG1, resulting in calcium mobilization and ERK activation, ultimately leading to T cell expansion and differentiation into effector cells. Gamma-delta TRs are produced through somatic rearrangement of a limited repertoire of variable (V), diversity (D), and joining (J) genes. The potential diversity of gamma-delta TRs is conferred by the unique ability to rearrange (D) genes in tandem and to utilize all three reading frames. The combinatorial diversity is considerably increased by the sequence exonuclease trimming and random nucleotide (N) region additions which occur during the V-(D)-J rearrangements. The chain is T cell receptor gamma variable 5 from Homo sapiens (Human).